We begin with the raw amino-acid sequence, 113 residues long: uncharacterized protein (113 aa).

The HTH hxlR-type domain maps to 16 to 113 (TPFGYTLSLI…CEWGVKNQNN (98 aa)).

This is an uncharacterized protein from Halalkalibacterium halodurans (strain ATCC BAA-125 / DSM 18197 / FERM 7344 / JCM 9153 / C-125) (Bacillus halodurans).